We begin with the raw amino-acid sequence, 394 residues long: NAD(P)H-quinone oxidoreductase subunit H (394 aa).

This sequence belongs to the complex I 49 kDa subunit family. NDH-1 can be composed of about 15 different subunits; different subcomplexes with different compositions have been identified which probably have different functions.

Its subcellular location is the cellular thylakoid membrane. It carries out the reaction a plastoquinone + NADH + (n+1) H(+)(in) = a plastoquinol + NAD(+) + n H(+)(out). The enzyme catalyses a plastoquinone + NADPH + (n+1) H(+)(in) = a plastoquinol + NADP(+) + n H(+)(out). Functionally, NDH-1 shuttles electrons from an unknown electron donor, via FMN and iron-sulfur (Fe-S) centers, to quinones in the respiratory and/or the photosynthetic chain. The immediate electron acceptor for the enzyme in this species is believed to be plastoquinone. Couples the redox reaction to proton translocation, and thus conserves the redox energy in a proton gradient. Cyanobacterial NDH-1 also plays a role in inorganic carbon-concentration. The sequence is that of NAD(P)H-quinone oxidoreductase subunit H from Prochlorococcus marinus (strain MIT 9313).